The following is a 210-amino-acid chain: Urease accessory protein UreE (210 aa).

The disordered stretch occupies residues P136–K210. Composition is skewed to basic and acidic residues over residues S145–D169 and H178–G196. The span at H197 to K210 shows a compositional bias: basic residues.

The protein belongs to the UreE family.

It localises to the cytoplasm. Its function is as follows. Involved in urease metallocenter assembly. Binds nickel. Probably functions as a nickel donor during metallocenter assembly. This is Urease accessory protein UreE from Bradyrhizobium sp. (strain ORS 278).